Reading from the N-terminus, the 963-residue chain is Isoleucine--tRNA ligase (963 aa).

The 'HIGH' region motif lies at 66-76 (PYANGDIHIGH). Glutamate 596 serves as a coordination point for L-isoleucyl-5'-AMP. The short motif at 637–641 (KMSKS) is the 'KMSKS' region element. Lysine 640 serves as a coordination point for ATP. Zn(2+) contacts are provided by cysteine 926, cysteine 929, cysteine 946, and cysteine 949.

This sequence belongs to the class-I aminoacyl-tRNA synthetase family. IleS type 1 subfamily. In terms of assembly, monomer. Zn(2+) serves as cofactor.

It localises to the cytoplasm. The catalysed reaction is tRNA(Ile) + L-isoleucine + ATP = L-isoleucyl-tRNA(Ile) + AMP + diphosphate. In terms of biological role, catalyzes the attachment of isoleucine to tRNA(Ile). As IleRS can inadvertently accommodate and process structurally similar amino acids such as valine, to avoid such errors it has two additional distinct tRNA(Ile)-dependent editing activities. One activity is designated as 'pretransfer' editing and involves the hydrolysis of activated Val-AMP. The other activity is designated 'posttransfer' editing and involves deacylation of mischarged Val-tRNA(Ile). The sequence is that of Isoleucine--tRNA ligase from Cupriavidus pinatubonensis (strain JMP 134 / LMG 1197) (Cupriavidus necator (strain JMP 134)).